The chain runs to 172 residues: Putative B3 domain-containing protein At1g05615 (172 aa).

Positions 69–169 (VDEGKIIDFE…NLAMVPLTPT (101 aa)) form a DNA-binding region, TF-B3.

Its subcellular location is the nucleus. This chain is Putative B3 domain-containing protein At1g05615, found in Arabidopsis thaliana (Mouse-ear cress).